Reading from the N-terminus, the 295-residue chain is Ethanolamine ammonia-lyase small subunit (295 aa).

The adenosylcob(III)alamin site is built by valine 207, glutamate 228, and cysteine 258.

This sequence belongs to the EutC family. The basic unit is a heterodimer which dimerizes to form tetramers. The heterotetramers trimerize; 6 large subunits form a core ring with 6 small subunits projecting outwards. The cofactor is adenosylcob(III)alamin.

The protein resides in the bacterial microcompartment. The enzyme catalyses ethanolamine = acetaldehyde + NH4(+). It functions in the pathway amine and polyamine degradation; ethanolamine degradation. Functionally, catalyzes the deamination of various vicinal amino-alcohols to oxo compounds. Allows this organism to utilize ethanolamine as the sole source of nitrogen and carbon in the presence of external vitamin B12. The sequence is that of Ethanolamine ammonia-lyase small subunit from Escherichia coli (strain SMS-3-5 / SECEC).